The following is a 157-amino-acid chain: N5-carboxyaminoimidazole ribonucleotide mutase (157 aa).

The substrate site is built by serine 8, aspartate 11, and arginine 38.

Belongs to the AIR carboxylase family. Class I subfamily.

The catalysed reaction is 5-carboxyamino-1-(5-phospho-D-ribosyl)imidazole + H(+) = 5-amino-1-(5-phospho-D-ribosyl)imidazole-4-carboxylate. The protein operates within purine metabolism; IMP biosynthesis via de novo pathway; 5-amino-1-(5-phospho-D-ribosyl)imidazole-4-carboxylate from 5-amino-1-(5-phospho-D-ribosyl)imidazole (N5-CAIR route): step 2/2. Functionally, catalyzes the conversion of N5-carboxyaminoimidazole ribonucleotide (N5-CAIR) to 4-carboxy-5-aminoimidazole ribonucleotide (CAIR). The polypeptide is N5-carboxyaminoimidazole ribonucleotide mutase (Methanocaldococcus jannaschii (strain ATCC 43067 / DSM 2661 / JAL-1 / JCM 10045 / NBRC 100440) (Methanococcus jannaschii)).